The chain runs to 409 residues: Nucleoprotein (409 aa).

5 disordered regions span residues M1–N32, L44–G69, A121–S145, R164–D195, and V238–N259. Over residues P15–G31 the composition is skewed to low complexity. Positions S29–L160 are RNA-binding. In terms of domain architecture, CoV N NTD spans G31–D156. Residues R164–A179 are compositionally biased toward low complexity. 2 stretches are compositionally biased toward basic and acidic residues: residues P180–S192 and K247–N259. Phosphoserine; by host is present on residues S190 and S192. The CoV N CTD domain maps to T215 to P331. Residues R226–D333 form a dimerization region. C320 and C323 are joined by a disulfide. A disordered region spans residues G326–L409. Low complexity predominate over residues R341 to Q358. The span at K368–N384 shows a compositional bias: basic and acidic residues. The residue at position 378 (T378) is a Phosphothreonine; by host. Residue S379 is modified to Phosphoserine; by host.

This sequence belongs to the gammacoronavirus nucleocapsid protein family. As to quaternary structure, homooligomer. Both monomeric and oligomeric forms interact with RNA. Interacts with protein M. Interacts with NSP3; this interaction serves to tether the genome to the newly translated replicase-transcriptase complex at a very early stage of infection. ADP-ribosylated. The ADP-ribosylation is retained in the virion during infection. In terms of processing, phosphorylated on serine and threonine residues.

Its subcellular location is the virion. The protein resides in the host endoplasmic reticulum-Golgi intermediate compartment. The protein localises to the host Golgi apparatus. Functionally, packages the positive strand viral genome RNA into a helical ribonucleocapsid (RNP) and plays a fundamental role during virion assembly through its interactions with the viral genome and membrane protein M. Plays an important role in enhancing the efficiency of subgenomic viral RNA transcription as well as viral replication. This Gallus gallus (Chicken) protein is Nucleoprotein.